Consider the following 64-residue polypeptide: Putative calcium channel toxin Tx758 (64 aa).

Positions 1–18 (MSTFVIVFLLLTAVLCHA) are cleaved as a signal peptide. The propeptide occupies 19–27 (EPALDETAR). 3 disulfide bridges follow: C29–C43, C36–C49, and C42–C58.

This sequence belongs to the scorpion calcin-like family. As to expression, expressed by the venom gland.

The protein resides in the secreted. Functionally, may increase intracellular calcium release through the activation of nuclear inositol 1,4,5-trisphosphate receptors (ITPR) of cardiomyocytes, thereby causing an increase in the contraction frequency of these cells. The protein is Putative calcium channel toxin Tx758 of Buthus israelis (Israeli scorpion).